The sequence spans 116 residues: Small ribosomal subunit protein uS17 (116 aa).

Belongs to the universal ribosomal protein uS17 family. In terms of assembly, part of the 30S ribosomal subunit.

Functionally, one of the primary rRNA binding proteins, it binds specifically to the 5'-end of 16S ribosomal RNA. In Pyrococcus horikoshii (strain ATCC 700860 / DSM 12428 / JCM 9974 / NBRC 100139 / OT-3), this protein is Small ribosomal subunit protein uS17.